The primary structure comprises 185 residues: Elongation factor P (185 aa).

This sequence belongs to the elongation factor P family.

It is found in the cytoplasm. It participates in protein biosynthesis; polypeptide chain elongation. In terms of biological role, involved in peptide bond synthesis. Stimulates efficient translation and peptide-bond synthesis on native or reconstituted 70S ribosomes in vitro. Probably functions indirectly by altering the affinity of the ribosome for aminoacyl-tRNA, thus increasing their reactivity as acceptors for peptidyl transferase. The chain is Elongation factor P from Finegoldia magna (strain ATCC 29328 / DSM 20472 / WAL 2508) (Peptostreptococcus magnus).